The sequence spans 766 residues: Protein zer-1 homolog (766 aa).

Residue A2 is modified to N-acetylalanine. LRR repeat units follow at residues 226-245, 246-268, and 278-302; these read SLVL…IVQL, HKLR…KLTR, and LGNL…KMEE. ARM repeat units follow at residues 427 to 467, 511 to 556, 558 to 600, 602 to 643, and 714 to 756; these read RSEQ…NFGI, DNDH…NITD, TPDN…NVAE, KELR…HIMF, and PDKY…HCSN.

It belongs to the zyg-11 family. As to quaternary structure, interacts with the ELOC-ELOB/Elongin BC complex. Part of an E3 ubiquitin ligase complex including ZER1, CUL2 and Elongin BC.

Serves as substrate adapter subunit in the E3 ubiquitin ligase complex ZYG11B-CUL2-Elongin BC. Acts redudantly with ZYG11B to target substrates bearing N-terminal glycine degrons for proteasomal degradation. Involved in the clearance of proteolytic fragments generated by caspase cleavage during apoptosis since N-terminal glycine degrons are strongly enriched at caspase cleavage sites. Also important in the quality control of protein N-myristoylation in which N-terminal glycine degrons are conditionally exposed after a failure of N-myristoylation. This is Protein zer-1 homolog (ZER1) from Pongo abelii (Sumatran orangutan).